A 462-amino-acid chain; its full sequence is Probable protein phosphatase 2C 1 (462 aa).

A PPM-type phosphatase domain is found at 60–362 (SSCIFTQQGR…DDCAVVCLFL (303 aa)). Mn(2+) is bound by residues D95, G96, D307, and D353. Disordered stretches follow at residues 369–394 (ETSDNEEQCFSSATNAVESDESQGAE) and 421–443 (EADNAEKEKTREGEQNWSGLEGV). Positions 376–385 (QCFSSATNAV) are enriched in polar residues. Positions 424–434 (NAEKEKTREGE) are enriched in basic and acidic residues.

This sequence belongs to the PP2C family. Interacts with GCN5. Mg(2+) is required as a cofactor. Mn(2+) serves as cofactor.

The enzyme catalyses O-phospho-L-seryl-[protein] + H2O = L-seryl-[protein] + phosphate. It carries out the reaction O-phospho-L-threonyl-[protein] + H2O = L-threonyl-[protein] + phosphate. Its function is as follows. May act as negative regulator of GCN5. The chain is Probable protein phosphatase 2C 1 (PPC6-6) from Arabidopsis thaliana (Mouse-ear cress).